The following is a 245-amino-acid chain: D-aminoacyl-tRNA deacylase (245 aa).

The protein belongs to the DtdA deacylase family. Monomer. Zn(2+) serves as cofactor.

The enzyme catalyses a D-aminoacyl-tRNA + H2O = a tRNA + a D-alpha-amino acid + H(+). The catalysed reaction is glycyl-tRNA(Ala) + H2O = tRNA(Ala) + glycine + H(+). Functionally, D-aminoacyl-tRNA deacylase with broad substrate specificity. By recycling D-aminoacyl-tRNA to D-amino acids and free tRNA molecules, this enzyme counteracts the toxicity associated with the formation of D-aminoacyl-tRNA entities in vivo. In Ignicoccus hospitalis (strain KIN4/I / DSM 18386 / JCM 14125), this protein is D-aminoacyl-tRNA deacylase.